Consider the following 47-residue polypeptide: uncharacterized protein (47 aa).

Disordered regions lie at residues 1–20 (MSTDNFEKIKGRPTQKEEWQ) and 25–47 (EKEKDENNRLFQEQKQKTTNRKG). Over residues 25-40 (EKEKDENNRLFQEQKQ) the composition is skewed to basic and acidic residues.

This is an uncharacterized protein from Dictyostelium discoideum (Social amoeba).